The chain runs to 837 residues: Protein translocase subunit SecA 1 (837 aa).

ATP contacts are provided by residues Q85, 103 to 107, and D492; that span reads GEGKT. Positions 791-837 are disordered; it reads KGEAINPAEGKPEAKRQPIRKDQHIGRNDPCPCGSGKKYKNCHGKEA. Residues 800–817 show a composition bias toward basic and acidic residues; the sequence is GKPEAKRQPIRKDQHIGR. The Zn(2+) site is built by C821, C823, C832, and H833. Residues 827–837 are compositionally biased toward basic residues; it reads KKYKNCHGKEA.

It belongs to the SecA family. Monomer and homodimer. Part of the essential Sec protein translocation apparatus which comprises SecA, SecYEG and auxiliary proteins SecDF. Other proteins may also be involved. It depends on Zn(2+) as a cofactor.

It is found in the cell membrane. It localises to the cytoplasm. It carries out the reaction ATP + H2O + cellular proteinSide 1 = ADP + phosphate + cellular proteinSide 2.. Part of the Sec protein translocase complex. Interacts with the SecYEG preprotein conducting channel. Has a central role in coupling the hydrolysis of ATP to the transfer of proteins into and across the cell membrane, serving as an ATP-driven molecular motor driving the stepwise translocation of polypeptide chains across the membrane. The protein is Protein translocase subunit SecA 1 of Listeria monocytogenes serovar 1/2a (strain ATCC BAA-679 / EGD-e).